A 129-amino-acid chain; its full sequence is Transcription factor bHLH138 (129 aa).

Basic and acidic residues predominate over residues 1-18; the sequence is MERYTKKNERFKAEEGKG. A disordered region spans residues 1–24; the sequence is MERYTKKNERFKAEEGKGSKKSRT. The bHLH domain maps to 19–68; it reads SKKSRTFLTERERRALFNDRFFDLKNLIPNPTKGGEASIVQDGIVYINEL.

It belongs to the bHLH protein family.

The protein localises to the nucleus. This chain is Transcription factor bHLH138, found in Arabidopsis thaliana (Mouse-ear cress).